The primary structure comprises 307 residues: Lipoyl synthase (307 aa).

[4Fe-4S] cluster-binding residues include Cys55, Cys60, Cys66, Cys81, Cys85, Cys88, and Ser292. The 215-residue stretch at 67-281 folds into the Radical SAM core domain; it reads WEDREATFLI…ARHAEELGFS (215 aa).

It belongs to the radical SAM superfamily. Lipoyl synthase family. [4Fe-4S] cluster serves as cofactor.

The protein resides in the cytoplasm. The enzyme catalyses [[Fe-S] cluster scaffold protein carrying a second [4Fe-4S](2+) cluster] + N(6)-octanoyl-L-lysyl-[protein] + 2 oxidized [2Fe-2S]-[ferredoxin] + 2 S-adenosyl-L-methionine + 4 H(+) = [[Fe-S] cluster scaffold protein] + N(6)-[(R)-dihydrolipoyl]-L-lysyl-[protein] + 4 Fe(3+) + 2 hydrogen sulfide + 2 5'-deoxyadenosine + 2 L-methionine + 2 reduced [2Fe-2S]-[ferredoxin]. It functions in the pathway protein modification; protein lipoylation via endogenous pathway; protein N(6)-(lipoyl)lysine from octanoyl-[acyl-carrier-protein]: step 2/2. Functionally, catalyzes the radical-mediated insertion of two sulfur atoms into the C-6 and C-8 positions of the octanoyl moiety bound to the lipoyl domains of lipoate-dependent enzymes, thereby converting the octanoylated domains into lipoylated derivatives. The polypeptide is Lipoyl synthase (Mycobacterium avium (strain 104)).